The following is a 529-amino-acid chain: 3-ketoacyl-CoA synthase 20 (529 aa).

Positions 1–22 (MSHNQNQPHRPVPVHVTNAEPN) are disordered. A run of 2 helical transmembrane segments spans residues 52–72 (LYIL…SFTI) and 84–104 (FHFL…TAYF). The FAE domain maps to 103–396 (YFTTRPRRVF…FFATLVARKV (294 aa)). Catalysis depends on residues cysteine 247, histidine 326, histidine 415, histidine 419, and asparagine 452.

It belongs to the thiolase-like superfamily. Chalcone/stilbene synthases family. In terms of tissue distribution, expressed in aerial organs. Expressed in leaves, flowers, siliques and stems. Expressed in roots, young seedlings, leaves, flowers and siliques.

Its subcellular location is the membrane. It carries out the reaction a very-long-chain acyl-CoA + malonyl-CoA + H(+) = a very-long-chain 3-oxoacyl-CoA + CO2 + CoA. Its pathway is lipid metabolism; fatty acid biosynthesis. With respect to regulation, inhibited by K3 herbicides such as alachlor, allidochlor, anilofos, cafenstrole, fentrazamide and flufenacet. Strongly inhibited by metazachlor and only slightly by mefluidide. Mediates the synthesis of VLCFAs from 22 to 26 carbons in length (e.g. C22, C24, C26). Functionally redundant with KCS2 in the two-carbon elongation of C22 fatty acids that is required for cuticular wax and root suberin biosynthesis. This chain is 3-ketoacyl-CoA synthase 20, found in Arabidopsis thaliana (Mouse-ear cress).